The following is a 562-amino-acid chain: MAARPQQPPMEMPDLSNAIVAQDEMGRPFIIVKDQGNKKRQHGLEAKKSHILAARSVASIIKTSLGPRGLDKILISPDGEITITNDGATILSQMELDNEIAKLLVQLSKSQDDEIGDGTTGVVVLASALLDQALELIQKGIHPIKIANGFDEAAKLAISKLEETCDDISASNDELFRDFLLRAAKTSLGSKIVSKDHDRFAEMAVEAVINVMDKDRKDVDFDLIKMQGRVGGSISDSKLINGVILDKDFSHPQMPKCVLPKEGSDGVKLAILTCPFEPPKPKTKHKLDISSVEEYQKLQTYEQDKFKEMIDDVKKAGADVVICQWGFDDEANHLLLQNDLPAVRWVGGQELEHIAISTNGRIVPRFQDLSKDKLGTCSRIYEQEFGTTKDRMLIIEQSKETKTVTCFVRGSNKMIVDEAERALHDSLCVVRNLVKDSRVVYGGGAAEVTMSLAVSEEADKQRGIDQYAFRGFAQALDTIPMTLAENSGLDPIGTLSTLKSKQLKEKISNIGVDCLGYGSNDMKELFVVDPFIGKKQQILLATQLCRMILKIDNVIISGKDEY.

Belongs to the TCP-1 chaperonin family. As to quaternary structure, heterooligomeric complex of about 850 to 900 kDa that forms two stacked rings, 12 to 16 nm in diameter.

It is found in the cytoplasm. In terms of biological role, molecular chaperone; assists the folding of proteins upon ATP hydrolysis. Known to play a role, in vitro, in the folding of actin and tubulin. In yeast may play a role in mitotic spindle formation. The chain is T-complex protein 1 subunit epsilon (CCT5) from Saccharomyces cerevisiae (strain ATCC 204508 / S288c) (Baker's yeast).